The following is a 335-amino-acid chain: Zinc-type alcohol dehydrogenase-like protein SAR2277 (335 aa).

It belongs to the zinc-containing alcohol dehydrogenase family. Quinone oxidoreductase subfamily.

The sequence is that of Zinc-type alcohol dehydrogenase-like protein SAR2277 from Staphylococcus aureus (strain MRSA252).